Consider the following 323-residue polypeptide: MGSYYSTESTKSNESNETTNNVEGIVDTIGGTVESINSDGIITTSENIVEIVLKENNQPTIFETQESNILEIVTTKIDVLKKILRLIGEVTSECQFSFQNVNEGGRIIVTELHDNKTILLKLVLKGTGFDFYKCSKSKITARLYLPDIDEALGLIGVDDTNTNPIIISMKKDKETSIFITRIDNSGFTEQVELPCRESVGLNIPLPKTTFQGKIVINAEKFRKICERICSVSDLIKISLTDKEVSFSARYYNLDFRYKHSVESKVLGQTIENYFFIDGMLKFIKYFQSSDEISIYIKKDFPLVIHGPFDNFGSIYVFTSPIEE.

Residues 1–21 (MGSYYSTESTKSNESNETTNN) are disordered. Gly-2 is lipidated: N-myristoyl glycine; by host.

This is an uncharacterized protein from Acanthamoeba polyphaga (Amoeba).